Consider the following 341-residue polypeptide: GDT1-like protein 1, chloroplastic (341 aa).

Positions 1-13 (MASVASSTVFASS) are enriched in low complexity. Disordered regions lie at residues 1–41 (MASV…GRSV) and 54–76 (VVTR…GGGR). Residues 1–57 (MASVASSTVFASSLPHHRATTRAPPTPPRIPRRARLPGRSVVSCLPKRGSEKLVVTR) constitute a chloroplast transit peptide. Transmembrane regions (helical) follow at residues 79–99 (PSLD…VLML), 117–137 (VVGD…LIFF), 158–178 (AIIF…SVVL), 203–223 (FLAA…AASG), 246–266 (GAGI…VFIA), 286–306 (LGVI…AVLG), and 318–338 (IVAY…LVEI).

The protein belongs to the GDT1 family.

It is found in the plastid. The protein localises to the chloroplast membrane. This is GDT1-like protein 1, chloroplastic from Oryza sativa subsp. japonica (Rice).